A 163-amino-acid polypeptide reads, in one-letter code: N5-carboxyaminoimidazole ribonucleotide mutase (163 aa).

The substrate site is built by serine 11, aspartate 14, and arginine 41.

It belongs to the AIR carboxylase family. Class I subfamily.

The enzyme catalyses 5-carboxyamino-1-(5-phospho-D-ribosyl)imidazole + H(+) = 5-amino-1-(5-phospho-D-ribosyl)imidazole-4-carboxylate. The protein operates within purine metabolism; IMP biosynthesis via de novo pathway; 5-amino-1-(5-phospho-D-ribosyl)imidazole-4-carboxylate from 5-amino-1-(5-phospho-D-ribosyl)imidazole (N5-CAIR route): step 2/2. Its function is as follows. Catalyzes the conversion of N5-carboxyaminoimidazole ribonucleotide (N5-CAIR) to 4-carboxy-5-aminoimidazole ribonucleotide (CAIR). In Pseudomonas aeruginosa (strain ATCC 15692 / DSM 22644 / CIP 104116 / JCM 14847 / LMG 12228 / 1C / PRS 101 / PAO1), this protein is N5-carboxyaminoimidazole ribonucleotide mutase.